The primary structure comprises 368 residues: UV excision repair protein rhp23 (368 aa).

The 77-residue stretch at 1–77 (MNLTFKNLQQ…IVCMVSRPKT (77 aa)) folds into the Ubiquitin-like domain. Composition is skewed to low complexity over residues 76 to 88 (KTSTSTPKSAASP) and 103 to 124 (APSSTVAESTSTTQTVAAAAPS). The interval 76–134 (KTSTSTPKSAASPAPNPPASVPEKKVEAPSSTVAESTSTTQTVAAAAPSNPDTTATSEA) is disordered. A phosphoserine mark is found at Ser-84 and Ser-87. 2 consecutive UBA domains span residues 135–185 (PIDA…LLTG) and 320–360 (QEES…LFEH). Ser-364 is subject to Phosphoserine.

The protein resides in the nucleus. Its function is as follows. Involved in postreplication repair of UV-damaged DNA. Postreplication repair functions in gap-filling of a daughter strand on replication of damaged DNA. In terms of biological role, protects ubiquitin chains against dissambly by deubiquitinating enzymes thereby promoting protein degradation. In Schizosaccharomyces pombe (strain 972 / ATCC 24843) (Fission yeast), this protein is UV excision repair protein rhp23 (rhp23).